The sequence spans 344 residues: L-rhamnose-proton symporter (344 aa).

The next 10 membrane-spanning stretches (helical) occupy residues 4–24 (PILL…CFYA), 38–58 (WSLG…WWLL), 68–88 (FDMA…IGNI), 101–121 (MGIG…TPVL), 137–157 (TLLG…AGLL), 175–195 (LILA…MDAA), 207–227 (INAL…GAVV), 255–275 (LIAN…QFFF), 290–310 (ISWM…GLLF), and 324–344 (LVLG…GMAA).

It belongs to the L-rhamnose transporter (TC 2.A.7.6) family.

It is found in the cell inner membrane. The catalysed reaction is L-rhamnopyranose(in) + H(+)(in) = L-rhamnopyranose(out) + H(+)(out). In terms of biological role, uptake of L-rhamnose across the cytoplasmic membrane with the concomitant transport of protons into the cell (symport system). The polypeptide is L-rhamnose-proton symporter (Pectobacterium carotovorum subsp. carotovorum (strain PC1)).